Consider the following 343-residue polypeptide: UDP-3-O-acylglucosamine N-acyltransferase 2 (343 aa).

The active-site Proton acceptor is H251.

Belongs to the transferase hexapeptide repeat family. LpxD subfamily. Homotrimer.

The enzyme catalyses a UDP-3-O-[(3R)-3-hydroxyacyl]-alpha-D-glucosamine + a (3R)-hydroxyacyl-[ACP] = a UDP-2-N,3-O-bis[(3R)-3-hydroxyacyl]-alpha-D-glucosamine + holo-[ACP] + H(+). The protein operates within bacterial outer membrane biogenesis; LPS lipid A biosynthesis. Functionally, catalyzes the N-acylation of UDP-3-O-acylglucosamine using 3-hydroxyacyl-ACP as the acyl donor. Is involved in the biosynthesis of lipid A, a phosphorylated glycolipid that anchors the lipopolysaccharide to the outer membrane of the cell. The polypeptide is UDP-3-O-acylglucosamine N-acyltransferase 2 (Legionella pneumophila (strain Paris)).